Consider the following 530-residue polypeptide: T-complex protein 1 subunit delta (530 aa).

A compositionally biased stretch (polar residues) spans 1-13 (MVSQAKQPSNATF). The segment at 1 to 20 (MVSQAKQPSNATFKNREKPQ) is disordered.

The protein belongs to the TCP-1 chaperonin family. Heterooligomeric complex of about 850 to 900 kDa that forms two stacked rings, 12 to 16 nm in diameter.

It is found in the cytoplasm. Functionally, molecular chaperone; assists the folding of proteins upon ATP hydrolysis. Known to play a role, in vitro, in the folding of actin and tubulin. In Kluyveromyces lactis (strain ATCC 8585 / CBS 2359 / DSM 70799 / NBRC 1267 / NRRL Y-1140 / WM37) (Yeast), this protein is T-complex protein 1 subunit delta (CCT4).